A 150-amino-acid chain; its full sequence is 3-hydroxyacyl-[acyl-carrier-protein] dehydratase FabZ (150 aa).

Histidine 53 is an active-site residue.

Belongs to the thioester dehydratase family. FabZ subfamily.

It is found in the cytoplasm. It catalyses the reaction a (3R)-hydroxyacyl-[ACP] = a (2E)-enoyl-[ACP] + H2O. In terms of biological role, involved in unsaturated fatty acids biosynthesis. Catalyzes the dehydration of short chain beta-hydroxyacyl-ACPs and long chain saturated and unsaturated beta-hydroxyacyl-ACPs. This chain is 3-hydroxyacyl-[acyl-carrier-protein] dehydratase FabZ, found in Photorhabdus laumondii subsp. laumondii (strain DSM 15139 / CIP 105565 / TT01) (Photorhabdus luminescens subsp. laumondii).